The chain runs to 275 residues: Large ribosomal subunit protein uL2 (275 aa).

2 disordered regions span residues 1–24 (MGIR…FSEI) and 208–275 (AGRT…RRRR). A compositionally biased stretch (polar residues) spans 12 to 22 (GTRQATVSDFS). Basic residues-rich tracts occupy residues 208–219 (AGRTRHLGRRPQ) and 255–275 (LGKK…RRRR).

The protein belongs to the universal ribosomal protein uL2 family. Part of the 50S ribosomal subunit. Forms a bridge to the 30S subunit in the 70S ribosome.

Its function is as follows. One of the primary rRNA binding proteins. Required for association of the 30S and 50S subunits to form the 70S ribosome, for tRNA binding and peptide bond formation. It has been suggested to have peptidyltransferase activity; this is somewhat controversial. Makes several contacts with the 16S rRNA in the 70S ribosome. The chain is Large ribosomal subunit protein uL2 from Picosynechococcus sp. (strain ATCC 27264 / PCC 7002 / PR-6) (Agmenellum quadruplicatum).